We begin with the raw amino-acid sequence, 110 residues long: Inner membrane protein H108R (110 aa).

The helical transmembrane segment at 10-32 (LIVIITILITTRELSTTMLIVSL) threads the bilayer.

This sequence belongs to the asfivirus H108R family.

It localises to the virion membrane. The polypeptide is Inner membrane protein H108R (African swine fever virus (isolate Pig/Kenya/KEN-50/1950) (ASFV)).